Consider the following 40-residue polypeptide: Photosystem II reaction center protein J (40 aa).

The chain crosses the membrane as a helical span at residues 8 to 28 (IPLWLIGTVTGIIVIGLIGIF).

This sequence belongs to the PsbJ family. PSII is composed of 1 copy each of membrane proteins PsbA, PsbB, PsbC, PsbD, PsbE, PsbF, PsbH, PsbI, PsbJ, PsbK, PsbL, PsbM, PsbT, PsbX, PsbY, PsbZ, Psb30/Ycf12, at least 3 peripheral proteins of the oxygen-evolving complex and a large number of cofactors. It forms dimeric complexes.

The protein localises to the plastid. It is found in the chloroplast thylakoid membrane. One of the components of the core complex of photosystem II (PSII). PSII is a light-driven water:plastoquinone oxidoreductase that uses light energy to abstract electrons from H(2)O, generating O(2) and a proton gradient subsequently used for ATP formation. It consists of a core antenna complex that captures photons, and an electron transfer chain that converts photonic excitation into a charge separation. This chain is Photosystem II reaction center protein J, found in Piper cenocladum (Ant piper).